Consider the following 550-residue polypeptide: CTP synthase (550 aa).

The interval 1–272 is amidoligase domain; that stretch reads MKTKFIFITG…DQKITSFLNL (272 aa). A CTP-binding site is contributed by Ser14. Ser14 is a UTP binding site. 15-20 serves as a coordination point for ATP; that stretch reads SLGKGL. Position 55 (Tyr55) interacts with L-glutamine. Asp72 contributes to the ATP binding site. Residues Asp72 and Glu146 each coordinate Mg(2+). Residues 153 to 155, 193 to 198, and Lys229 each bind CTP; these read DIE and KTKPTQ. UTP is bound by residues 193–198 and Lys229; that span reads KTKPTQ. The Glutamine amidotransferase type-1 domain maps to 297–550; it reads TITIVGKYVG…IHAACNHNKQ (254 aa). Residue Gly359 coordinates L-glutamine. The active-site Nucleophile; for glutamine hydrolysis is Cys386. Residues 387–390, Glu410, and Arg478 each bind L-glutamine; that span reads LGMQ. Catalysis depends on residues His523 and Glu525.

This sequence belongs to the CTP synthase family. Homotetramer.

The catalysed reaction is UTP + L-glutamine + ATP + H2O = CTP + L-glutamate + ADP + phosphate + 2 H(+). It carries out the reaction L-glutamine + H2O = L-glutamate + NH4(+). The enzyme catalyses UTP + NH4(+) + ATP = CTP + ADP + phosphate + 2 H(+). It functions in the pathway pyrimidine metabolism; CTP biosynthesis via de novo pathway; CTP from UDP: step 2/2. Allosterically activated by GTP, when glutamine is the substrate; GTP has no effect on the reaction when ammonia is the substrate. The allosteric effector GTP functions by stabilizing the protein conformation that binds the tetrahedral intermediate(s) formed during glutamine hydrolysis. Inhibited by the product CTP, via allosteric rather than competitive inhibition. Its function is as follows. Catalyzes the ATP-dependent amination of UTP to CTP with either L-glutamine or ammonia as the source of nitrogen. Regulates intracellular CTP levels through interactions with the four ribonucleotide triphosphates. In Lawsonia intracellularis (strain PHE/MN1-00), this protein is CTP synthase.